The following is a 164-amino-acid chain: Peptidyl-prolyl cis-trans isomerase A-like 4F (164 aa).

The region spanning 7-163 (FFEITRDGKP…KKITIADCGQ (157 aa)) is the PPIase cyclophilin-type domain.

The protein belongs to the cyclophilin-type PPIase family. PPIase A subfamily.

It is found in the cytoplasm. The enzyme catalyses [protein]-peptidylproline (omega=180) = [protein]-peptidylproline (omega=0). In terms of biological role, PPIases accelerate the folding of proteins. It catalyzes the cis-trans isomerization of proline imidic peptide bonds in oligopeptides. The sequence is that of Peptidyl-prolyl cis-trans isomerase A-like 4F from Homo sapiens (Human).